Consider the following 218-residue polypeptide: MNLMLMGLPGAGKGTQAEKIVDAYHIPHISTGDMFRAAMADQTDLGVKAKAFIDKGELVPDDVTNGIVEERLSQADTNVGYLLDGFPRTLDQADALAVITDKLNKPLDGVINIDVDPEILADRLSGRFICKTCGATYHKLYHPTQVEGTCDRCGGHVFFQREDDKPETVKNRLKVNIEMNTPLLDFYEKRNLLYTVDGNQEIDDVFAAVKKVLDTIKD.

10–15 is a binding site for ATP; it reads GAGKGT. The segment at 30 to 59 is NMP; it reads STGDMFRAAMADQTDLGVKAKAFIDKGELV. Residues Thr31, Arg36, 57 to 59, 85 to 88, and Gln92 each bind AMP; these read ELV and GFPR. The LID stretch occupies residues 126–164; the sequence is GRFICKTCGATYHKLYHPTQVEGTCDRCGGHVFFQREDD. Position 127 (Arg127) interacts with ATP. Positions 130 and 133 each coordinate Zn(2+). 136 to 137 is a binding site for ATP; it reads TY. 2 residues coordinate Zn(2+): Cys150 and Cys153. AMP-binding residues include Arg161 and Arg172. ATP is bound at residue Gln200.

It belongs to the adenylate kinase family. As to quaternary structure, monomer.

It is found in the cytoplasm. It catalyses the reaction AMP + ATP = 2 ADP. It participates in purine metabolism; AMP biosynthesis via salvage pathway; AMP from ADP: step 1/1. In terms of biological role, catalyzes the reversible transfer of the terminal phosphate group between ATP and AMP. Plays an important role in cellular energy homeostasis and in adenine nucleotide metabolism. In Latilactobacillus sakei subsp. sakei (strain 23K) (Lactobacillus sakei subsp. sakei), this protein is Adenylate kinase.